The primary structure comprises 244 residues: Phosphoadenosine 5'-phosphosulfate reductase (244 aa).

Catalysis depends on Cys-239, which acts as the Nucleophile; cysteine thiosulfonate intermediate.

The protein belongs to the PAPS reductase family. CysH subfamily.

It localises to the cytoplasm. The catalysed reaction is [thioredoxin]-disulfide + sulfite + adenosine 3',5'-bisphosphate + 2 H(+) = [thioredoxin]-dithiol + 3'-phosphoadenylyl sulfate. The protein operates within sulfur metabolism; hydrogen sulfide biosynthesis; sulfite from sulfate: step 3/3. Catalyzes the formation of sulfite from phosphoadenosine 5'-phosphosulfate (PAPS) using thioredoxin as an electron donor. In Shigella flexneri, this protein is Phosphoadenosine 5'-phosphosulfate reductase.